A 293-amino-acid chain; its full sequence is 4-hydroxy-tetrahydrodipicolinate synthase (293 aa).

Threonine 45 is a pyruvate binding site. The Proton donor/acceptor role is filled by tyrosine 133. Lysine 162 (schiff-base intermediate with substrate) is an active-site residue. Isoleucine 204 serves as a coordination point for pyruvate.

This sequence belongs to the DapA family. Homotetramer; dimer of dimers.

Its subcellular location is the cytoplasm. It catalyses the reaction L-aspartate 4-semialdehyde + pyruvate = (2S,4S)-4-hydroxy-2,3,4,5-tetrahydrodipicolinate + H2O + H(+). The protein operates within amino-acid biosynthesis; L-lysine biosynthesis via DAP pathway; (S)-tetrahydrodipicolinate from L-aspartate: step 3/4. Functionally, catalyzes the condensation of (S)-aspartate-beta-semialdehyde [(S)-ASA] and pyruvate to 4-hydroxy-tetrahydrodipicolinate (HTPA). This chain is 4-hydroxy-tetrahydrodipicolinate synthase, found in Mesorhizobium japonicum (strain LMG 29417 / CECT 9101 / MAFF 303099) (Mesorhizobium loti (strain MAFF 303099)).